Consider the following 367-residue polypeptide: Ribosomal lysine N-methyltransferase 5 (367 aa).

The disordered stretch occupies residues 55–74; the sequence is EGGRKKKRVRRRNKASSVEE. Residues 58-68 are compositionally biased toward basic residues; it reads RKKKRVRRRNK. Residues W110, 170 to 172, D192, W256, and M288 contribute to the S-adenosyl-L-methionine site; that span reads GAG.

This sequence belongs to the class I-like SAM-binding methyltransferase superfamily. RKM5 family.

S-adenosyl-L-methionine-dependent protein-lysine N-methyltransferase that monomethylates 60S ribosomal protein L1 (RPL1A and RPL1B) at 'Lys-46'. This chain is Ribosomal lysine N-methyltransferase 5 (RKM5), found in Saccharomyces cerevisiae (strain VIN 13) (Baker's yeast).